Consider the following 237-residue polypeptide: Urease accessory protein UreF (237 aa).

The protein belongs to the UreF family. As to quaternary structure, ureD, UreF and UreG form a complex that acts as a GTP-hydrolysis-dependent molecular chaperone, activating the urease apoprotein by helping to assemble the nickel containing metallocenter of UreC. The UreE protein probably delivers the nickel.

Its subcellular location is the cytoplasm. Its function is as follows. Required for maturation of urease via the functional incorporation of the urease nickel metallocenter. In Methylibium petroleiphilum (strain ATCC BAA-1232 / LMG 22953 / PM1), this protein is Urease accessory protein UreF.